The primary structure comprises 277 residues: Ethanolamine ammonia-lyase small subunit (277 aa).

Val-164, Glu-185, and Cys-214 together coordinate adenosylcob(III)alamin.

The protein belongs to the EutC family. In terms of assembly, the basic unit is a heterodimer which dimerizes to form tetramers. The heterotetramers trimerize; 6 large subunits form a core ring with 6 small subunits projecting outwards. The cofactor is adenosylcob(III)alamin.

The protein resides in the bacterial microcompartment. It catalyses the reaction ethanolamine = acetaldehyde + NH4(+). Its pathway is amine and polyamine degradation; ethanolamine degradation. In terms of biological role, catalyzes the deamination of various vicinal amino-alcohols to oxo compounds. Allows this organism to utilize ethanolamine as the sole source of nitrogen and carbon in the presence of external vitamin B12. This chain is Ethanolamine ammonia-lyase small subunit, found in Pseudomonas fluorescens (strain SBW25).